We begin with the raw amino-acid sequence, 907 residues long: Protein translocase subunit SecA (907 aa).

ATP-binding positions include Gln-87, 105-109, and Asp-512; that span reads GEGKT. The segment at 834-907 is disordered; that stretch reads QSDVDDMEQR…KYKQCHGKLS (74 aa). A compositionally biased stretch (basic and acidic residues) spans 840 to 856; that stretch reads MEQRRREEEAKIQRDYQ. Over residues 865–876 the composition is skewed to polar residues; that stretch reads DESQASSDNTPK. The segment covering 878-887 has biased composition (basic and acidic residues); that stretch reads MIREGDKVGR. 4 residues coordinate Zn(2+): Cys-891, Cys-893, Cys-902, and His-903. Residues 897–907 are compositionally biased toward basic residues; the sequence is KKYKQCHGKLS.

The protein belongs to the SecA family. As to quaternary structure, monomer and homodimer. Part of the essential Sec protein translocation apparatus which comprises SecA, SecYEG and auxiliary proteins SecDF-YajC and YidC. The cofactor is Zn(2+).

It is found in the cell inner membrane. The protein resides in the cytoplasm. It carries out the reaction ATP + H2O + cellular proteinSide 1 = ADP + phosphate + cellular proteinSide 2.. Part of the Sec protein translocase complex. Interacts with the SecYEG preprotein conducting channel. Has a central role in coupling the hydrolysis of ATP to the transfer of proteins into and across the cell membrane, serving both as a receptor for the preprotein-SecB complex and as an ATP-driven molecular motor driving the stepwise translocation of polypeptide chains across the membrane. In Shewanella denitrificans (strain OS217 / ATCC BAA-1090 / DSM 15013), this protein is Protein translocase subunit SecA.